The sequence spans 418 residues: Gamma-glutamyl phosphate reductase (418 aa).

The protein belongs to the gamma-glutamyl phosphate reductase family.

The protein resides in the cytoplasm. The catalysed reaction is L-glutamate 5-semialdehyde + phosphate + NADP(+) = L-glutamyl 5-phosphate + NADPH + H(+). It participates in amino-acid biosynthesis; L-proline biosynthesis; L-glutamate 5-semialdehyde from L-glutamate: step 2/2. Functionally, catalyzes the NADPH-dependent reduction of L-glutamate 5-phosphate into L-glutamate 5-semialdehyde and phosphate. The product spontaneously undergoes cyclization to form 1-pyrroline-5-carboxylate. The protein is Gamma-glutamyl phosphate reductase of Citrifermentans bemidjiense (strain ATCC BAA-1014 / DSM 16622 / JCM 12645 / Bem) (Geobacter bemidjiensis).